A 428-amino-acid chain; its full sequence is MMKSIALALCLTHHSPMVLSIVDYGDSQEKTIDSLWKKPHGSDLTWSGFSRVGVTEAYFAVPVDHFLTNPPSLRLSQTIYCRRGSSYVETEKVEEEDRDDFLKQVWFLTDNLVFFFVDIEEYIVIEQLGDTVYLWDASSCYTSKLVTIDDENGPVTSINWTQDGLDLAVGLDNSEVQVWDCVSNRHVRTLRGGHESRVGSLAWNNHILTTGGMDGKIVNNDVRIRSSIIGTYVGHTEEVCGLKWSESGKKLASGGNDNVVHIWDRSLASSNPTRQWLHRFEEHTAAVRALAWCPFQASLLATGGGVGDGKINFWNTHTGACLNSVETGSQVCSLLWSKSERELLSAHGFTQNQLTLWKYPSMVKMAELNGHTSRVLFMAQSPDGCTVASAAGDETLRLWNVFGEPPKTTKKAASKKYTEPFAHVNHIR.

WD repeat units follow at residues 106-145, 150-189, 193-230, 234-273, 282-324, 326-367, and 370-409; these read WFLTDNLVFFFVDIEEYIVIEQLGDTVYLWDASSCYTSKL, DENGPVTSINWTQDGLDLAVGLDNSEVQVWDCVSNRHVRT, GHESRVGSLAWNNHILTTGGMDGKIVNNDVRIRSSIIG, GHTEEVCGLKWSESGKKLASGGNDNVVHIWDRSLASSNPT, EHTA…CLNS, ETGS…KMAE, and GHTSRVLFMAQSPDGCTVASAAGDETLRLWNVFGEPPKTT.

It belongs to the WD repeat CDC20/Fizzy family. In terms of assembly, the APC/C is composed of at least 11 subunits that stay tightly associated throughout the cell cycle.

Its subcellular location is the nucleus. The protein operates within protein modification; protein ubiquitination. In terms of biological role, component of the anaphase promoting complex/cyclosome (APC/C), a cell cycle-regulated E3 ubiquitin-protein ligase complex that controls progression through mitosis and the G1 phase of the cell cycle. This is Cell division cycle 20.6, cofactor of APC complex (CDC20-6) from Arabidopsis thaliana (Mouse-ear cress).